The chain runs to 192 residues: Adenylate kinase (192 aa).

12–17 (GSGKTT) serves as a coordination point for ATP. An NMP region spans residues 33-62 (STGDLLRAEVAKDSELGKKIDKIISGGNLV). Residues Thr34, Arg39, 60–62 (NLV), 87–90 (GYPR), and Gln94 contribute to the AMP site. The tract at residues 129–135 (GRARGAD) is LID. Residue Arg130 coordinates ATP. Residues Arg132 and Arg144 each contribute to the AMP site. Arg172 is an ATP binding site.

Belongs to the adenylate kinase family. As to quaternary structure, monomer.

The protein localises to the cytoplasm. The catalysed reaction is AMP + ATP = 2 ADP. Its pathway is purine metabolism; AMP biosynthesis via salvage pathway; AMP from ADP: step 1/1. Its function is as follows. Catalyzes the reversible transfer of the terminal phosphate group between ATP and AMP. Plays an important role in cellular energy homeostasis and in adenine nucleotide metabolism. The chain is Adenylate kinase from Campylobacter hominis (strain ATCC BAA-381 / DSM 21671 / CCUG 45161 / LMG 19568 / NCTC 13146 / CH001A).